The chain runs to 169 residues: MTDTQNRVAMGYIKGVFGIKGWLKIAANTEYSDSLLDYPEWHLVKDGKTVSVTLEAGKVVNSELQVKFEGINDRDLAFSLRGYTIEIPREAFAPTEEDEYYWTDLVGMTVVNKDHTVLGKVSNLMETGANDVLMIDGEHGQILIPFVSQYIETVDTGSKIITADWGLDY.

A PRC barrel domain is found at 97–169 (EDEYYWTDLV…IITADWGLDY (73 aa)).

It belongs to the RimM family. In terms of assembly, binds ribosomal protein uS19.

The protein localises to the cytoplasm. In terms of biological role, an accessory protein needed during the final step in the assembly of 30S ribosomal subunit, possibly for assembly of the head region. Essential for efficient processing of 16S rRNA. May be needed both before and after RbfA during the maturation of 16S rRNA. It has affinity for free ribosomal 30S subunits but not for 70S ribosomes. This Neisseria meningitidis serogroup C / serotype 2a (strain ATCC 700532 / DSM 15464 / FAM18) protein is Ribosome maturation factor RimM.